Reading from the N-terminus, the 419-residue chain is UDP-N-acetylglucosamine 1-carboxyvinyltransferase (419 aa).

22–23 (KN) provides a ligand contact to phosphoenolpyruvate. R91 is a UDP-N-acetyl-alpha-D-glucosamine binding site. The Proton donor role is filled by C115. Position 115 is a 2-(S-cysteinyl)pyruvic acid O-phosphothioketal (C115). UDP-N-acetyl-alpha-D-glucosamine-binding positions include 120–124 (RPVDL), 160–163 (KVSV), D305, and I327.

The protein belongs to the EPSP synthase family. MurA subfamily.

Its subcellular location is the cytoplasm. The enzyme catalyses phosphoenolpyruvate + UDP-N-acetyl-alpha-D-glucosamine = UDP-N-acetyl-3-O-(1-carboxyvinyl)-alpha-D-glucosamine + phosphate. It functions in the pathway cell wall biogenesis; peptidoglycan biosynthesis. In terms of biological role, cell wall formation. Adds enolpyruvyl to UDP-N-acetylglucosamine. The sequence is that of UDP-N-acetylglucosamine 1-carboxyvinyltransferase from Serratia proteamaculans (strain 568).